The primary structure comprises 367 residues: Innexin inx4 (367 aa).

The Cytoplasmic segment spans residues 1 to 21 (MYAAVKPLSKYLQFKSVHIYD). The helical transmembrane segment at 22-42 (AIFTLHSKVTVALLLACTFLL) threads the bilayer. The Extracellular segment spans residues 43–110 (SSKQYFGDPI…PENRNYITYY (68 aa)). Residues 111–131 (QWVVLVLLLESFVFYMPAFLW) traverse the membrane as a helical segment. Over 132–186 (KIWEGGRLKHLCDDFHKMAVCKDKSRTHLRVLVNYFSSDYKETHFRYFVSYVFCE) the chain is Cytoplasmic. A helical membrane pass occupies residues 187 to 207 (ILNLSISILNFLLLDVFFGGF). Over 208–268 (WGRYRNALLS…LLPLNILNEK (61 aa)) the chain is Extracellular. The helical transmembrane segment at 269–289 (IFAFLWIWFILVAMLISLKFL) threads the bilayer. At 290–367 (YRLATVLYPG…IKIPPGADKI (78 aa)) the chain is on the cytoplasmic side.

The protein belongs to the pannexin family. Expressed in nurse cells and oocyte during oogenesis. Uniform expression in imaginal wing disk and low expression in developing imaginal CNS. Expressed in embryonic pole cells and primordial germ cells.

The protein localises to the cell membrane. It localises to the cell junction. Its subcellular location is the gap junction. Its function is as follows. Structural component of the gap junctions in germline cells. Required for differentiation and survival of germline cysts in females and of spermatogonia in males; gap junctional communication between spermatogonia and somatic cyst cells may be required for normal differentiation and survival of spermatogonia. The protein is Innexin inx4 (zpg) of Drosophila melanogaster (Fruit fly).